Consider the following 283-residue polypeptide: MNYNEVAKILAESLPYIQKYRGKTIVVKYGGSAMLDEQLKKYVINDLVLMKCVGINLVVVHGGGPFISSYLKKLNKESVFIDGLRYTDEETMDVVQMVLSGKVNKDLVKLIQSYGGKALGLCGIDGAMIKAEKISKGVDLGKVGEITDINTEIIISSIDNGYIPVISSIALGDDNETYNINADTCTFKIAAALKAQNLILLTDVPGVMRDMDDNSTLISELRLKDIKALYEDNIIKGGMLPKINCCVEAIKSGVKSAHIIDGRVPHCLLVELFSKEGIGTMIY.

Substrate is bound by residues 63–64 (GG), Arg-85, and Asn-179.

Belongs to the acetylglutamate kinase family. ArgB subfamily.

The protein localises to the cytoplasm. It catalyses the reaction N-acetyl-L-glutamate + ATP = N-acetyl-L-glutamyl 5-phosphate + ADP. Its pathway is amino-acid biosynthesis; L-arginine biosynthesis; N(2)-acetyl-L-ornithine from L-glutamate: step 2/4. In terms of biological role, catalyzes the ATP-dependent phosphorylation of N-acetyl-L-glutamate. The polypeptide is Acetylglutamate kinase (Clostridium kluyveri (strain NBRC 12016)).